Here is a 297-residue protein sequence, read N- to C-terminus: uncharacterized protein (297 aa).

The chain crosses the membrane as a helical span at residues 191–211 (VMIILSCSNITILAVLSIVGL). Over residues 275-287 (SKTSETQSVSGST) the composition is skewed to polar residues. The disordered stretch occupies residues 275–297 (SKTSETQSVSGSTHSDEKLTAPM). The segment covering 288–297 (HSDEKLTAPM) has biased composition (basic and acidic residues).

It is found in the host membrane. This is an uncharacterized protein from Cryphonectria parasitica mycoreovirus 1 (strain 9B21) (CpMYRV-1).